Here is a 226-residue protein sequence, read N- to C-terminus: UPF0173 metal-dependent hydrolase Tpet_1587 (226 aa).

It belongs to the UPF0173 family.

In Thermotoga petrophila (strain ATCC BAA-488 / DSM 13995 / JCM 10881 / RKU-1), this protein is UPF0173 metal-dependent hydrolase Tpet_1587.